The primary structure comprises 188 residues: Large ribosomal subunit protein bL35m (188 aa).

Belongs to the bacterial ribosomal protein bL35 family.

It localises to the mitochondrion. The polypeptide is Large ribosomal subunit protein bL35m (MRPL35) (Bos taurus (Bovine)).